The primary structure comprises 239 residues: Orotidine 5'-phosphate decarboxylase (239 aa).

Substrate-binding positions include D12, K34, 61–70 (DLKFHDIPNT), T125, R188, Q197, G217, and R218. K63 (proton donor) is an active-site residue.

It belongs to the OMP decarboxylase family. Type 1 subfamily. In terms of assembly, homodimer.

The enzyme catalyses orotidine 5'-phosphate + H(+) = UMP + CO2. It functions in the pathway pyrimidine metabolism; UMP biosynthesis via de novo pathway; UMP from orotate: step 2/2. Its function is as follows. Catalyzes the decarboxylation of orotidine 5'-monophosphate (OMP) to uridine 5'-monophosphate (UMP). The protein is Orotidine 5'-phosphate decarboxylase of Syntrophomonas wolfei subsp. wolfei (strain DSM 2245B / Goettingen).